A 60-amino-acid chain; its full sequence is Large ribosomal subunit protein bL32 (60 aa).

Positions 1–16 (MAVPKRKTSPSKRGMR) are enriched in basic residues. Positions 1 to 60 (MAVPKRKTSPSKRGMRRSADALKAPTYVEDKNSGEMRRPHHIDLKTGMYRGRQVLTPKES) are disordered. A compositionally biased stretch (basic and acidic residues) spans 28-44 (VEDKNSGEMRRPHHIDL).

It belongs to the bacterial ribosomal protein bL32 family.

In Mesorhizobium japonicum (strain LMG 29417 / CECT 9101 / MAFF 303099) (Mesorhizobium loti (strain MAFF 303099)), this protein is Large ribosomal subunit protein bL32.